The following is a 1398-amino-acid chain: Protein timeless (1398 aa).

Residues 237–268 are necessary for normal circadian rhythm; sequence VSTLQKLLSLWFEASLSESSEDNESNTSPPKQ. Disordered regions lie at residues 254 to 300, 322 to 452, 478 to 555, 1127 to 1147, and 1220 to 1239; these read ESSE…GGMR, ARVP…QKFN, TKGK…LRRK, TASS…SSVS, and NHRT…SSTT. Positions 273-290 are enriched in low complexity; the sequence is SSPMLTSDPTSDSSDNGS. Residues 291-300 are compositionally biased toward gly residues; it reads NGRGMGGGMR. The span at 338–355 shows a compositional bias: polar residues; it reads MTGNDSEQPGSPEQSQPA. Basic and acidic residues predominate over residues 365 to 375; the sequence is EDQRHRQLNEH. The span at 376–390 shows a compositional bias: acidic residues; that stretch reads GEEDEDEDEVEEEEY. Polar residues-rich tracts occupy residues 400 to 421, 440 to 452, and 504 to 515; these read LNLT…SSAP, ASTS…QKFN, and QVENQESISTSS. A compositionally biased stretch (low complexity) spans 522 to 531; the sequence is QGKPQHQKPP. A Nuclear localization signal motif is present at residues 550–560; that stretch reads KELRRKKLVKR.

The protein belongs to the timeless family. As to quaternary structure, forms a heterodimer with period (PER); the complex then translocates into the nucleus. Phosphorylated with a circadian rhythmicity. As to expression, expressed in head, photoreceptors, lateral neurons and glial cells in the lamina and medulla of the optic lobes. Expression follows a light-dark cycle, levels show a significant decrease at the end of the night and then remain low throughout the light period (at protein level).

It is found in the nucleus. Its subcellular location is the cytoplasm. The protein localises to the perinuclear region. Required for the production of circadian rhythms. The biological cycle depends on the rhythmic formation and nuclear localization of the TIM-PER complex. Light induces the degradation of TIM, which promotes elimination of PER. Nuclear activity of the heterodimer coordinatively regulates PER and TIM transcription through a negative feedback loop. Behaves as a negative element in circadian transcriptional loop. Does not appear to bind DNA, suggesting indirect transcriptional inhibition. This chain is Protein timeless (tim), found in Drosophila melanogaster (Fruit fly).